The primary structure comprises 447 residues: Tol-Pal system protein TolB (447 aa).

The N-terminal stretch at 1 to 29 (MITMSRIRSLAAFAVFVILGVAAVLPAQA) is a signal peptide.

Belongs to the TolB family. The Tol-Pal system is composed of five core proteins: the inner membrane proteins TolA, TolQ and TolR, the periplasmic protein TolB and the outer membrane protein Pal. They form a network linking the inner and outer membranes and the peptidoglycan layer.

It localises to the periplasm. Functionally, part of the Tol-Pal system, which plays a role in outer membrane invagination during cell division and is important for maintaining outer membrane integrity. The protein is Tol-Pal system protein TolB of Paramagnetospirillum magneticum (strain ATCC 700264 / AMB-1) (Magnetospirillum magneticum).